We begin with the raw amino-acid sequence, 1202 residues long: Adenine-specific methyltransferase PglX (1202 aa).

The protein belongs to the methyltransferase superfamily. PglX adenine methyltransferase family.

It carries out the reaction a 2'-deoxyadenosine in DNA + S-adenosyl-L-methionine = an N(6)-methyl-2'-deoxyadenosine in DNA + S-adenosyl-L-homocysteine + H(+). Its function is as follows. BREX systems (bacteriophage exclusion) provide immunity against bacteriophage. Part of a type 1 BREX system which protects against dsDNA phage. This system allows phage adsorption but prevents phage DNA replication, without degradation of the phage DNA. Methylation of bacterial DNA by this protein guides self/non-self discrimination. In terms of biological role, probably methylates the adenine in the fifth position of the hexamer 5'-ACRCAG-3' in genomic DNA. N(6)-methylated adenine on the fifth position of 5'-ACRCAG-3' is found in the genome; there are 1906 sites in the genomic DNA. This is Adenine-specific methyltransferase PglX from Lacticaseibacillus casei (strain Zhang) (Lactobacillus casei).